A 265-amino-acid chain; its full sequence is Undecaprenyl-diphosphatase (265 aa).

The next 7 membrane-spanning stretches (helical) occupy residues 38 to 58 (RSDFFNIVIQAGAILAICLAL), 75 to 95 (RDYVLKVGVAFLVTAVVGLIV), 108 to 128 (PVAWALLIGGVWMLVAEHFAG), 135 to 155 (VVTWKVAIAVGLAQVVAGVFP), 181 to 201 (FVFMVGIPTMFAASGYALLEM), 215 to 235 (VAVAFVAATITGFVVVKWLLG), and 244 to 264 (VFAVYRMLLGAALLLWLPAAA).

The protein belongs to the UppP family.

The protein localises to the cell inner membrane. It catalyses the reaction di-trans,octa-cis-undecaprenyl diphosphate + H2O = di-trans,octa-cis-undecaprenyl phosphate + phosphate + H(+). In terms of biological role, catalyzes the dephosphorylation of undecaprenyl diphosphate (UPP). Confers resistance to bacitracin. The polypeptide is Undecaprenyl-diphosphatase (Xanthomonas axonopodis pv. citri (strain 306)).